The primary structure comprises 165 residues: Cyclic pyranopterin monophosphate synthase (165 aa).

Residues 76–78 and 114–115 each bind substrate; these read LCH and ME. D129 is an active-site residue.

This sequence belongs to the MoaC family. In terms of assembly, homohexamer; trimer of dimers.

The enzyme catalyses (8S)-3',8-cyclo-7,8-dihydroguanosine 5'-triphosphate = cyclic pyranopterin phosphate + diphosphate. The protein operates within cofactor biosynthesis; molybdopterin biosynthesis. Catalyzes the conversion of (8S)-3',8-cyclo-7,8-dihydroguanosine 5'-triphosphate to cyclic pyranopterin monophosphate (cPMP). This Brucella canis (strain ATCC 23365 / NCTC 10854 / RM-666) protein is Cyclic pyranopterin monophosphate synthase.